Here is a 465-residue protein sequence, read N- to C-terminus: NADH-quinone oxidoreductase subunit N (465 aa).

Helical transmembrane passes span 9-29 (FNFVLLFPVLSLLFWAIVLLL), 44-64 (ASIIALFSTLCFLLIYNGFVL), 73-93 (LFVSDNYAIFAQIVILVFSML), 110-130 (FLFMIASLILMISSTNLIVIF), 159-179 (YFTLAAVGAGFFVFACAFVYL), 198-218 (PILLCAGVMFLVIVGVKLSIA), 235-255 (FIAFISIVPKIAMIIVVLRIF), 265-285 (EYIVALLAIFSMLAVSIVALI), 292-312 (MLAYSSITHSSFILAVIVSSM), 327-347 (IFALFVYWISFAFANYGIFLI), 371-391 (IMLAIFILCIAGIPPFGIFWG), 405-427 (YALVFAVALSSMIMLYAYLKILI), and 444-464 (VKQKIILCLCLIGSVSCVFLL).

This sequence belongs to the complex I subunit 2 family. NDH-1 is composed of 14 different subunits. Subunits NuoA, H, J, K, L, M, N constitute the membrane sector of the complex.

Its subcellular location is the cell inner membrane. It catalyses the reaction a quinone + NADH + 5 H(+)(in) = a quinol + NAD(+) + 4 H(+)(out). In terms of biological role, NDH-1 shuttles electrons from NADH, via FMN and iron-sulfur (Fe-S) centers, to quinones in the respiratory chain. The immediate electron acceptor for the enzyme in this species is believed to be ubiquinone. Couples the redox reaction to proton translocation (for every two electrons transferred, four hydrogen ions are translocated across the cytoplasmic membrane), and thus conserves the redox energy in a proton gradient. The sequence is that of NADH-quinone oxidoreductase subunit N from Campylobacter lari (strain RM2100 / D67 / ATCC BAA-1060).